A 537-amino-acid chain; its full sequence is Extracellular exo-inulinase inuE (537 aa).

Positions 1-19 (MARLLKAVTVCALAGIAHA) are cleaved as a signal peptide. Residue Asp-41 is part of the active site. Residues Asn-49, Asn-67, Asn-112, Asn-300, Asn-363, Asn-398, Asn-430, and Asn-531 are each glycosylated (N-linked (GlcNAc...) asparagine).

Belongs to the glycosyl hydrolase 32 family.

Its subcellular location is the secreted. The enzyme catalyses Hydrolysis of terminal, non-reducing (2-&gt;1)- and (2-&gt;6)-linked beta-D-fructofuranose residues in fructans.. In terms of biological role, exo-inulinase involved in utilization of the plant storage polymer inulin, consisting of fructooligosaccharides with a degree of polymerization (DP) value from 2 to 60. Splits off terminal fructose units successively from the non-reducing end of the inulin molecule, and also hydrolyze sucrose and raffinose. The polypeptide is Extracellular exo-inulinase inuE (inuE) (Aspergillus niger (strain ATCC MYA-4892 / CBS 513.88 / FGSC A1513)).